We begin with the raw amino-acid sequence, 725 residues long: MTKELPSGYFQGPFRPYKTFQPSLTERPLSKFEQFAVFSILLISLIRLYKLYIPDRVVFDEIHLIKYIKNYYDGSIFVDIHPPLGKLIYFYITKLFSFDKDFQIDIIGDLYPEDFPYLWLRLFSGICGIGHVLLTFFTLRITCNSVISIVITILICLENSMVTVSRLILLEGPSLFVQSLVIYNYKAFTTRIPFTGCWYFNLFVTGIALGLNISLKISGLFTFAWVGILTCVQLWEILGDLRISIWQFIKHLVLRVVAFIMVPLTIYCSVFYIHFENLPNEGPGSGFLTPHFRSTLDDYQQQPLQVLYGSTITIKHNALEKYLHSHDLTYPRGSNLQQVTLYDFPDVNNEWVIETKQKYNEEKLMTDQREVKDGDVVRLYHKATGHYLHVNDIRPPISEHEYSYEVNGNETRGLLGNEDYEFKIRMLVKKPHAENDLPLIKLRTTETIFQLIHQATRCNLMSHEQKLPDWGEYQNEVLCVKEPTIPNTLWYVESSSHPLLKDTKKLKTFPKFSFWSKLIETHKVMFNLNKGFTNPHPYASKPLDWPLLSRGIAFFSNYNLKSIDEESSLIYYLGNVAIYYSVFFVGLIAIFKCAIYSFIKLNPYASPPSSSKSSPYANFYNNSWPYLVGWFINYIPYCLMSRNLYLHHYLSALNFGILLLSQYLNYRVAKNKIIGGIITATIFVSAIYCFYEFIPITYGLPWTLDQCNSHKWFPNWDIDCMTYTG.

6 consecutive transmembrane segments (helical) span residues 34-54, 117-137, 145-165, 192-212, 219-239, and 256-276; these read QFAV…LYIP, YLWL…LTFF, SVIS…VTVS, IPFT…LGLN, GLFT…EILG, and VVAF…IHFE. 3 consecutive MIR domains span residues 303-356, 368-427, and 439-495; these read PLQV…IETK, QREV…IRML, and LIKL…VESS. A glycan (N-linked (GlcNAc...) asparagine) is linked at N409. A run of 4 helical transmembrane segments spans residues 570-590, 619-639, 644-664, and 673-693; these read IYYL…LIAI, FYNN…PYCL, LYLH…SQYL, and IIGG…FYEF.

The protein belongs to the glycosyltransferase 39 family.

Its subcellular location is the endoplasmic reticulum membrane. It carries out the reaction a di-trans,poly-cis-dolichyl beta-D-mannosyl phosphate + L-seryl-[protein] = 3-O-(alpha-D-mannosyl)-L-seryl-[protein] + a di-trans,poly-cis-dolichyl phosphate + H(+). The enzyme catalyses a di-trans,poly-cis-dolichyl beta-D-mannosyl phosphate + L-threonyl-[protein] = 3-O-(alpha-D-mannosyl)-L-threonyl-[protein] + a di-trans,poly-cis-dolichyl phosphate + H(+). It functions in the pathway protein modification; protein glycosylation. Its function is as follows. Protein mannosyltransferase (PMT) involved in hyphal morphogenesis and drug sensitivity. Transfers mannose from Dol-P-mannose to Ser or Thr residues on proteins. PMT1, PMT2 and PMT4 account for most of the protein-O-glycosylation activity, while PMT5 and PMT6 may specifically modulate a much narrower spectrum of target proteins. Required for biofilm formation. This is Dolichyl-phosphate-mannose--protein mannosyltransferase 5 from Candida albicans (strain SC5314 / ATCC MYA-2876) (Yeast).